The following is a 583-amino-acid chain: Radixin (583 aa).

The FERM domain occupies 5–295; the sequence is INVRVTTMDA…GNHELYMRRR (291 aa). A 1,2-diacyl-sn-glycero-3-phospho-(1D-myo-inositol) is bound at residue 60–63; it reads KLNK. At Lys83 the chain carries N6-succinyllysine. Lys278 serves as a coordination point for a 1,2-diacyl-sn-glycero-3-phospho-(1D-myo-inositol). 3 disordered regions span residues 309 to 336, 374 to 407, and 460 to 526; these read AREEKHQKQLERAQLENEKKKREIAEKE, ELDQERKRAKEEAERLEKERQAAEEAKSALAKQA, and KEEL…RVKK. Positions 374-400 are enriched in basic and acidic residues; the sequence is ELDQERKRAKEEAERLEKERQAAEEAK. Residues 469-480 are compositionally biased toward pro residues; it reads APPPPPPPPVIP. Composition is skewed to basic and acidic residues over residues 483-492 and 506-525; these read ENEHDEHDEN and MNHRSEEERVTETQKNERVK. Thr564 bears the Phosphothreonine; by ROCK2 mark.

In terms of assembly, interacts with CPNE1 (via VWFA domain) and CPNE4 (via VWFA domain). Binds NHERF1. Interacts with NHERF1, NHERF2, LAYN, MME/NEP and ICAM2. Interacts (via FERM domain) with SPN/CD43 cytoplasmic tail. Interacts with CD44. Interacts with CLIC5; may work together in a complex which also includes EZR and MYO6 to stabilize linkages between the plasma membrane and subjacent actin cytoskeleton at the base of stereocilia. Post-translationally, phosphorylated by tyrosine-protein kinases. Phosphorylation by ROCK2 suppresses the head-to-tail association of the N-terminal and C-terminal halves resulting in an opened conformation which is capable of actin and membrane-binding.

It is found in the cell membrane. The protein localises to the cytoplasm. Its subcellular location is the cytoskeleton. The protein resides in the cleavage furrow. It localises to the cell projection. It is found in the microvillus. The protein localises to the stereocilium. A head-to-tail association, of the N-terminal and C-terminal halves results in a closed conformation (inactive form) which is incapable of actin or membrane-binding. Probably plays a crucial role in the binding of the barbed end of actin filaments to the plasma membrane. The polypeptide is Radixin (RDX) (Bos taurus (Bovine)).